The chain runs to 165 residues: Lipoprotein signal peptidase (165 aa).

The next 3 helical transmembrane spans lie at 9–29 (FLAI…VLLY), 69–89 (KYFL…FLFL), and 98–118 (IRFS…DIVF). Catalysis depends on residues Asp124 and Asp142. Residues 133–153 (WFFPTFNFADIFISLGTLIFI) traverse the membrane as a helical segment.

Belongs to the peptidase A8 family.

Its subcellular location is the cell inner membrane. The catalysed reaction is Release of signal peptides from bacterial membrane prolipoproteins. Hydrolyzes -Xaa-Yaa-Zaa-|-(S,diacylglyceryl)Cys-, in which Xaa is hydrophobic (preferably Leu), and Yaa (Ala or Ser) and Zaa (Gly or Ala) have small, neutral side chains.. It functions in the pathway protein modification; lipoprotein biosynthesis (signal peptide cleavage). This protein specifically catalyzes the removal of signal peptides from prolipoproteins. In Chlamydia abortus (strain DSM 27085 / S26/3) (Chlamydophila abortus), this protein is Lipoprotein signal peptidase.